We begin with the raw amino-acid sequence, 637 residues long: 1,4-alpha-glucan branching enzyme GlgB (637 aa).

D307 (nucleophile) is an active-site residue. E361 functions as the Proton donor in the catalytic mechanism.

The protein belongs to the glycosyl hydrolase 13 family. GlgB subfamily. Monomer.

The enzyme catalyses Transfers a segment of a (1-&gt;4)-alpha-D-glucan chain to a primary hydroxy group in a similar glucan chain.. Its pathway is glycan biosynthesis; glycogen biosynthesis. Its function is as follows. Catalyzes the formation of the alpha-1,6-glucosidic linkages in glycogen by scission of a 1,4-alpha-linked oligosaccharide from growing alpha-1,4-glucan chains and the subsequent attachment of the oligosaccharide to the alpha-1,6 position. This Oceanobacillus iheyensis (strain DSM 14371 / CIP 107618 / JCM 11309 / KCTC 3954 / HTE831) protein is 1,4-alpha-glucan branching enzyme GlgB.